A 1266-amino-acid chain; its full sequence is Kinesin-like protein KIN-12G (1266 aa).

The disordered stretch occupies residues 1 to 22; sequence MPSDCGDDDHGGGSAPAGFELQ. Positions 32–369 constitute a Kinesin motor domain; the sequence is NVQVVIRVRP…LKFAQRAKYI (338 aa). 113 to 120 contributes to the ATP binding site; sequence GQTGSGKT. Coiled-coil stretches lie at residues 613-668, 817-854, 1029-1060, and 1084-1120; these read MEFI…SEAV, RSEL…FKRK, ARES…AERV, and SELL…MNRH.

This sequence belongs to the TRAFAC class myosin-kinesin ATPase superfamily. Kinesin family. KIN-12 subfamily.

The protein is Kinesin-like protein KIN-12G of Oryza sativa subsp. japonica (Rice).